The primary structure comprises 435 residues: Ras association domain-containing protein 9 (435 aa).

Residues 1–22 (MAPFGRNLLKTRHKNRSPTKDM) form a disordered region. One can recognise a Ras-associating domain in the interval 25 to 119 (EEKEIVVWVC…MQFVLVKTDA (95 aa)). Positions 195–291 (HTIHQQVQRM…KLSAEIEREV (97 aa)) form a coiled coil. The tract at residues 371-423 (SKDGCQGKENRGKEAEASSSNGEIPPLTQRVFNTYTNDTDSDTGISSNHSQDS) is disordered. A compositionally biased stretch (basic and acidic residues) spans 375-386 (CQGKENRGKEAE). Over residues 400 to 423 (RVFNTYTNDTDSDTGISSNHSQDS) the composition is skewed to polar residues.

As to quaternary structure, interacts with PAM. Testis, kidney, skeletal muscle, liver, lung, brain, heart, pituitary gland, adrenal gland and ovary.

The protein localises to the endosome. Functionally, may play a role in regulating vesicuar trafficking in cells. The sequence is that of Ras association domain-containing protein 9 (Rassf9) from Rattus norvegicus (Rat).